The sequence spans 326 residues: Malate dehydrogenase (326 aa).

12-18 (GGTGQIA) contributes to the NAD(+) binding site. 2 residues coordinate substrate: R93 and R99. Residues N106, Q113, and 130-132 (VGN) each bind NAD(+). Residues N132 and R163 each contribute to the substrate site. H188 (proton acceptor) is an active-site residue.

Belongs to the LDH/MDH superfamily. MDH type 2 family.

The enzyme catalyses (S)-malate + NAD(+) = oxaloacetate + NADH + H(+). Its function is as follows. Catalyzes the reversible oxidation of malate to oxaloacetate. This is Malate dehydrogenase from Chlamydia trachomatis serovar A (strain ATCC VR-571B / DSM 19440 / HAR-13).